Reading from the N-terminus, the 300-residue chain is Ribosomal protein L11 methyltransferase (300 aa).

S-adenosyl-L-methionine is bound by residues T147, G168, D190, and N236.

The protein belongs to the methyltransferase superfamily. PrmA family.

The protein localises to the cytoplasm. The enzyme catalyses L-lysyl-[protein] + 3 S-adenosyl-L-methionine = N(6),N(6),N(6)-trimethyl-L-lysyl-[protein] + 3 S-adenosyl-L-homocysteine + 3 H(+). Its function is as follows. Methylates ribosomal protein L11. This is Ribosomal protein L11 methyltransferase from Leptospira interrogans serogroup Icterohaemorrhagiae serovar Lai (strain 56601).